A 42-amino-acid polypeptide reads, in one-letter code: MAEKRDVLNYLEMVIRSYDIULSCAAHVLDRVKFRIERKDED.

Residues selenocysteine 21 and cysteine 24 each contribute to the Ni(2+) site. Position 21 (selenocysteine 21) is a non-standard amino acid, selenocysteine. A propeptide spans 28-42 (VLDRVKFRIERKDED) (removed in mature form).

Belongs to the [NiFe]/[NiFeSe] hydrogenase large subunit family. As to quaternary structure, the F420-non-reducing hydrogenase vhu is composed of four subunits; VhuA, VhuD, VhuG and VhuU. It depends on Ni(2+) as a cofactor.

The chain is F420-non-reducing hydrogenase vhu subunit U (vhuU) from Methanopyrus kandleri (strain AV19 / DSM 6324 / JCM 9639 / NBRC 100938).